A 519-amino-acid polypeptide reads, in one-letter code: Maturase K (519 aa).

The protein belongs to the intron maturase 2 family. MatK subfamily.

The protein localises to the plastid. It localises to the chloroplast. Usually encoded in the trnK tRNA gene intron. Probably assists in splicing its own and other chloroplast group II introns. In Cycas panzhihuaensis (Dukou cycad), this protein is Maturase K.